The primary structure comprises 563 residues: Cystathionine gamma-synthase-like protein ankD (563 aa).

The segment at 1-37 (MGELGPASAQHGSDSISFSGSYTQPLGAPQPPNEPHA) is disordered. Residues 10 to 24 (QHGSDSISFSGSYTQ) show a composition bias toward polar residues.

Belongs to the trans-sulfuration enzymes family. MET7 subfamily. Pyridoxal 5'-phosphate serves as cofactor.

The enzyme catalyses cyclo(L-arginyl-(Z)-dehydro-3,4-dihydroxytyrosyl) + O-acetyl-L-homoserine = cyclo(L-arginyl-(Z)-dehydro-4-O-homoseryl-tyrosyl) + acetate + H(+). The protein operates within secondary metabolite biosynthesis. Cystathionine gamma-synthase-like protein; part of the ank cluster that mediates the biosynthesis of NK13650 C, a highly modified cyclo-arginine-tyrosine dipeptide. AnkD catalyzes the attachment of L-homoserine moiety using O-acetyl-L-homoserine as co-substrate. Within the pathway, the cyclodipeptide synthase ankA acts as the scaffold-generating enzyme and is responsible for formation of the cyclo-Arg-Tyr diketopiperazine (cRY) from L-Arg and L-Tyr. The ankA product cRY is desaturated by the cytochrome P450 monooxygenase ankB to yield a dehydro-cyclodipeptide intermediate. The FAD-dependent monooxygenase ankC then installs the m-OH, ankD catalyzes the attachment of L-homoserine, and ankE ligates citrate to the ankD product to yield NK13650 B. The O-methyltransferase ankF is responsible for methylation of the C-17 phenol group of NK13650 B to produce NK13650 D. Amidation of NK13650 D with L-Asp by ankG then leads to the production of NK13650 C, whereas amidation of NK13650 B produces NK13650 A. The sequence is that of Cystathionine gamma-synthase-like protein ankD from Aspergillus thermomutatus (Neosartorya pseudofischeri).